We begin with the raw amino-acid sequence, 346 residues long: Methylthioribose-1-phosphate isomerase (346 aa).

Substrate contacts are provided by residues 50 to 52 (RGA), arginine 93, and glutamine 196. The Proton donor role is filled by aspartate 237. 247–248 (NK) lines the substrate pocket.

The protein belongs to the eIF-2B alpha/beta/delta subunits family. MtnA subfamily.

The enzyme catalyses 5-(methylsulfanyl)-alpha-D-ribose 1-phosphate = 5-(methylsulfanyl)-D-ribulose 1-phosphate. It participates in amino-acid biosynthesis; L-methionine biosynthesis via salvage pathway; L-methionine from S-methyl-5-thio-alpha-D-ribose 1-phosphate: step 1/6. Its function is as follows. Catalyzes the interconversion of methylthioribose-1-phosphate (MTR-1-P) into methylthioribulose-1-phosphate (MTRu-1-P). The polypeptide is Methylthioribose-1-phosphate isomerase (Alkalilimnicola ehrlichii (strain ATCC BAA-1101 / DSM 17681 / MLHE-1)).